The primary structure comprises 232 residues: GTP cyclohydrolase III (232 aa).

It belongs to the archaeal-type GTP cyclohydrolase family.

It carries out the reaction GTP + 3 H2O = 2-amino-5-formylamino-6-(5-phospho-D-ribosylamino)pyrimidin-4(3H)-one + 2 phosphate + 2 H(+). Functionally, catalyzes the formation of 2-amino-5-formylamino-6-ribofuranosylamino-4(3H)-pyrimidinone ribonucleotide monophosphate and inorganic phosphate from GTP. Also has an independent pyrophosphate phosphohydrolase activity. In Saccharolobus islandicus (strain Y.G.57.14 / Yellowstone #1) (Sulfolobus islandicus), this protein is GTP cyclohydrolase III.